The primary structure comprises 299 residues: ATP synthase gamma chain (299 aa).

This sequence belongs to the ATPase gamma chain family. As to quaternary structure, F-type ATPases have 2 components, CF(1) - the catalytic core - and CF(0) - the membrane proton channel. CF(1) has five subunits: alpha(3), beta(3), gamma(1), delta(1), epsilon(1). CF(0) has three main subunits: a, b and c.

The protein localises to the cell membrane. Produces ATP from ADP in the presence of a proton gradient across the membrane. The gamma chain is believed to be important in regulating ATPase activity and the flow of protons through the CF(0) complex. This chain is ATP synthase gamma chain, found in Clavibacter michiganensis subsp. michiganensis (strain NCPPB 382).